We begin with the raw amino-acid sequence, 308 residues long: ADP-L-glycero-D-manno-heptose-6-epimerase (308 aa).

Residues 10 to 11 (FI), 31 to 32 (DN), K38, K53, 75 to 79 (EGACS), and N92 each bind NADP(+). The active-site Proton acceptor is Y139. K143 is a binding site for NADP(+). Residue N168 coordinates substrate. 2 residues coordinate NADP(+): V169 and K177. K177 serves as the catalytic Proton acceptor. Residues S179, H186, 200–203 (FAGS), R208, and Y271 each bind substrate.

The protein belongs to the NAD(P)-dependent epimerase/dehydratase family. HldD subfamily. Homopentamer. The cofactor is NADP(+).

The catalysed reaction is ADP-D-glycero-beta-D-manno-heptose = ADP-L-glycero-beta-D-manno-heptose. It participates in nucleotide-sugar biosynthesis; ADP-L-glycero-beta-D-manno-heptose biosynthesis; ADP-L-glycero-beta-D-manno-heptose from D-glycero-beta-D-manno-heptose 7-phosphate: step 4/4. In terms of biological role, catalyzes the interconversion between ADP-D-glycero-beta-D-manno-heptose and ADP-L-glycero-beta-D-manno-heptose via an epimerization at carbon 6 of the heptose. This chain is ADP-L-glycero-D-manno-heptose-6-epimerase, found in Haemophilus influenzae (strain PittGG).